Here is a 221-residue protein sequence, read N- to C-terminus: Epididymal secretory glutathione peroxidase (221 aa).

An N-terminal signal peptide occupies residues 1-21 (MTAWLGASYVLPILLVSFVQT). The active site involves Cys73.

It belongs to the glutathione peroxidase family. As to expression, epididymis.

The protein localises to the secreted. It carries out the reaction 2 glutathione + H2O2 = glutathione disulfide + 2 H2O. Protects cells and enzymes from oxidative damage, by catalyzing the reduction of hydrogen peroxide, lipid peroxides and organic hydroperoxide, by glutathione. May constitute a glutathione peroxidase-like protective system against peroxide damage in sperm membrane lipids. The sequence is that of Epididymal secretory glutathione peroxidase (GPX5) from Canis lupus familiaris (Dog).